Consider the following 1828-residue polypeptide: MSTRSIVTSKVSWTPEKFISALSYPEHCSITLVKRLKASVKLKDLKQNISRDAPSWTFEHLFVAFKCAVSNLAKQWAELSTTDKEKTRRMFCTPSRLNTAHRPEVFYLLECCTYILEQMQVVTKNTSHLYDCIRSGVSICNRLLDMEIFEPAISLLMKTHKNLIILLTYRDHDAIPTATLLNPTLDVSEIQLESCLFVPMVPASYFLNIGTIVVTFQLNVLRCLSLSQINGLSLNTINNLQSEDGPFQWIERSFPSQVQLANSRREILARLLTRFSMIQNNALQSFKLLILSIALWLNILSSQRADDKEFDVNQLETRILQLFSKVVQLCKSEDIEGSILNKDMTQLHHLLENLSKESRLHILLQLSQLYYKYNDFQLSAAYVIRGYSLSFEDISFKLKFLLFSFRLSIHDNSICFPFNLIQELSSLQQLFVENALPYSEALHLLDSIERSFRLFNDSTVFDDTVFALNISEILSWILSSVVRDILVEDELLNLQLKIRKFLMFTFHIIRSFSELTKFQSSLEGCLNLAAYYEDAEFPQKLSNHLYNLCVKSSNVNYARECISLSIKIAVSHKLTNDETYLLKILKNFQLRYHDSLQLQEKCDVLHTTFNQLDLYVGTTSVGKSSVLDNILKRIFNSLTSINDSNIEKLLESISYSLLKLFFKCANEGSRYNASAALSFKLSLMLHEKEEVLLLKTNVSCVLANHGYNDIKFEEMVLCVIKGDQNLLEHNSNNNAKLALNESLLCSWENLLCYRRAEDDSRILTIIESWTIFISRFSSVISRCSFTDFEINSILNFFFCFLHTVEPSGKLTFELAFLEIFYELFNCLLHLQFSKYLVIIGTLLSDKYMTLGFSGKAHLFYTKCYSYLRQCKSSPFINFWNVSYGKYLILTGNTDKGILQLKKYSLSSEEDFNSNGLSRTVSLNLLLYERIQLSDALFQLGYTTVSLGFIMQNLKVIKGLFSKSSKEHFNGGKYITWRLFAVSAHSNVCAARIYEHMGQAREAEFFYRQACSISEKMPFSCFSATFQLRLCSLLTRAGKLEKGEKILFDLTEAMKSTDTYHKLLWNYGAAEVCATKSELDGAICHYSECVKLLEIIKSEYYLFFNRNREKSLTKGIKRLSLSSQPTFVTESNTTEFDDWSILQNTAANLLRLISMFELKRGNLEIAKALMTDSTKCSIASFFNIVSANILKSKLIVCEADSTLFGDPVLRTLPDSVISLPGISHKFQKNQSKTKALGENTGFRKGSKRLDYLRERLKINLQNVRLSCEIIFSNAYERSSVCVCREVNELISYSTIMQSALTTIGETTDVDSSSASFFLEIPKALGFHRRREAQKFRNQHKELHFSSLEQILNSRLSIPDVRTFQDNFIDSLPSIWNVVSITINNSGEDLFISKIRKGHSPLIFRLPLQRHNSRDADEEILVFTKAQTELFRIISKSNQMAQNGKHYTRREDKETWWKERRHLDQCLQQLLENIEISWLGGFKGIFNPHKIDTSLFAKFSSQFQNIIAKNFNMDKKTPVPTLSPEILELFITLGKPGYEGYEQLLEDLIYFILDIFQFRGLHFAYDEIDTDQLSMDLQDALNAYFNNYVSEENRSHTVLVLDKSVHQFPWESLPCLNRQSVSRVPSLSILRDILSQSFVVNGEYVEVRKEAGSYILNPSLDLKHTQEMFEHKLVEGGWKGLIASQPSNRDFIKMLSGNDFFLYFGHGGGEQYTTSYDLATLKRCAVTILMGCSSGALYECGSFEPWGTPLDYLSAGCPTLVANLWDVTDKDIDRFSLKMLESWGLFENKAPFVNSTSICTAVSESRSCCHLRYLNGAAPVIYGIPAYIIP.

The Peptidase C50 domain maps to 1647-1741 (KEAGSYILNP…SGALYECGSF (95 aa)). Residue cysteine 1730 is part of the active site.

Interacts with cut2. Interacts with rad21.

It localises to the cytoplasm. The protein resides in the nucleus. The catalysed reaction is All bonds known to be hydrolyzed by this endopeptidase have arginine in P1 and an acidic residue in P4. P6 is often occupied by an acidic residue or by a hydroxy-amino-acid residue, the phosphorylation of which enhances cleavage.. With respect to regulation, it is inactivated via its interaction with cut2, which probably covers its active site. Cut2 degradation at anaphase, liberates it and triggers rad21 cleavage. Functionally, caspase-like protease, which plays a central role in the chromosome segregation by cleaving the rad21 subunit of the cohesin complex at the onset of anaphase. During most of the cell cycle, it is inactivated by securin/cut2 protein. It is also required for pointed nuclear formation. The protein is Separin (cut1) of Schizosaccharomyces pombe (strain 972 / ATCC 24843) (Fission yeast).